Reading from the N-terminus, the 324-residue chain is Aldo-keto reductase family 1 member A1-A (324 aa).

Residues 10–19 (GQRMPTVGLG), Thr20, Trp21, and Asp44 each bind NADP(+). The active-site Proton donor is the Tyr49. NADP(+)-binding residues include Ser161, Asn162, Ser210, Leu212, Ser214, Lys262, Ser263, Val264, Thr265, Arg268, Gln271, and Asn272.

Belongs to the aldo/keto reductase family.

Its subcellular location is the cytoplasm. It is found in the cytosol. The protein resides in the apical cell membrane. It carries out the reaction a primary alcohol + NADP(+) = an aldehyde + NADPH + H(+). The enzyme catalyses S-nitroso-CoA + NADPH + H(+) = sulfinamide-CoA + NADP(+). The catalysed reaction is S-nitrosoglutathione + NADPH + H(+) = S-(hydroxysulfenamide)glutathione + NADP(+). In terms of biological role, catalyzes the NADPH-dependent reduction of a wide variety of carbonyl-containing compounds to their corresponding alcohols. Displays enzymatic activity towards endogenous metabolites such as aromatic and aliphatic aldehydes, ketones, monosaccharides and bile acids. Acts as an aldehyde-detoxification enzyme. Also acts as an inhibitor of protein S-nitrosylation by mediating degradation of S-nitroso-coenzyme A (S-nitroso-CoA), a cofactor required to S-nitrosylate proteins. Also acts as a S-nitroso-glutathione reductase by catalyzing the NADPH-dependent reduction of S-nitrosoglutathione. Displays no reductase activity towards retinoids. This Danio rerio (Zebrafish) protein is Aldo-keto reductase family 1 member A1-A (akr1a1a).